We begin with the raw amino-acid sequence, 366 residues long: Beta sliding clamp (366 aa).

This sequence belongs to the beta sliding clamp family. As to quaternary structure, forms a ring-shaped head-to-tail homodimer around DNA which binds and tethers DNA polymerases and other proteins to the DNA. The DNA replisome complex has a single clamp-loading complex (3 tau and 1 each of delta, delta', psi and chi subunits) which binds 3 Pol III cores (1 core on the leading strand and 2 on the lagging strand) each with a beta sliding clamp dimer. Additional proteins in the replisome are other copies of gamma, psi and chi, Ssb, DNA helicase and RNA primase.

The protein localises to the cytoplasm. Its function is as follows. Confers DNA tethering and processivity to DNA polymerases and other proteins. Acts as a clamp, forming a ring around DNA (a reaction catalyzed by the clamp-loading complex) which diffuses in an ATP-independent manner freely and bidirectionally along dsDNA. Initially characterized for its ability to contact the catalytic subunit of DNA polymerase III (Pol III), a complex, multichain enzyme responsible for most of the replicative synthesis in bacteria; Pol III exhibits 3'-5' exonuclease proofreading activity. The beta chain is required for initiation of replication as well as for processivity of DNA replication. In Buchnera aphidicola subsp. Acyrthosiphon pisum (strain APS) (Acyrthosiphon pisum symbiotic bacterium), this protein is Beta sliding clamp (dnaN).